A 470-amino-acid chain; its full sequence is Cell division protein FtsP (470 aa).

A signal peptide (tat-type signal) is located at residues 1–27 (MSLSRRQFIQASGIALCAGAVPLKASA). One can recognise a Plastocyanin-like domain in the interval 229-287 (VRLRLLNASNSRRYQLQMSDGRPLHVISGDQGFLPAPVSVKQLSLAPGERREILVDMSN).

The protein belongs to the FtsP family. Predicted to be exported by the Tat system. The position of the signal peptide cleavage has not been experimentally proven.

It localises to the periplasm. Cell division protein that is required for growth during stress conditions. May be involved in protecting or stabilizing the divisomal assembly under conditions of stress. The polypeptide is Cell division protein FtsP (Shigella dysenteriae serotype 1 (strain Sd197)).